A 729-amino-acid polypeptide reads, in one-letter code: Capsid protein VP1 (729 aa).

The segment covering 1-10 (MAPPAKRAKR) has biased composition (basic residues). Disordered stretches follow at residues 1–39 (MAPPAKRAKRGWVPPGYKYLGPGNSLDQGEPTNPSDAAA), 96–115 (LATDSEPGTSGVSRAGKRTR), and 130–185 (KLTS…VGVS). A Nuclear localization signal motif is present at residues 4–13 (PAKRAKRGWV). Positions 19–64 (YLGPGNSLDQGEPTNPSDAAAKEHDEAYDQYIKSGKNPYLYFSAAD) are phospholipase A2-like. A compositionally biased stretch (polar residues) spans 25–35 (SLDQGEPTNPS). The segment covering 132–142 (TSSAAQQSSQT) has biased composition (low complexity). Over residues 168–184 (GPGGSGGGGSGGGGVGV) the composition is skewed to gly residues. Asn325 serves as a coordination point for Mg(2+).

The protein belongs to the parvoviridae capsid protein family.

It is found in the virion. It localises to the host nucleus. Its function is as follows. Capsid protein self-assembles to form an icosahedral capsid with a T=1 symmetry, about 22 nm in diameter, and consisting of 60 copies of two size variants of the capsid proteins, VP1 and VP2, which differ by the presence of an N-terminal extension in the minor protein VP1. The capsid encapsulates the genomic ssDNA. Capsid proteins are responsible for the attachment to host cell receptors. This attachment induces virion internalization predominantly through clathrin-dependent endocytosis. Binding to the host receptors also induces capsid rearrangements leading to surface exposure of VP1 N-terminus, specifically its phospholipase A2-like region and putative nuclear localization signal(s). VP1 N-terminus might serve as a lipolytic enzyme to breach the endosomal membrane during entry into host cell and might contribute to virus transport to the nucleus. The chain is Capsid protein VP1 from Mus musculus (Mouse).